A 122-amino-acid chain; its full sequence is Large ribosomal subunit protein uL14 (122 aa).

It belongs to the universal ribosomal protein uL14 family. As to quaternary structure, part of the 50S ribosomal subunit. Forms a cluster with proteins L3 and L19. In the 70S ribosome, L14 and L19 interact and together make contacts with the 16S rRNA in bridges B5 and B8.

In terms of biological role, binds to 23S rRNA. Forms part of two intersubunit bridges in the 70S ribosome. The chain is Large ribosomal subunit protein uL14 from Borrelia recurrentis (strain A1).